A 47-amino-acid chain; its full sequence is PhoP/PhoQ regulator MgrB (47 aa).

A helical membrane pass occupies residues 6 to 26; the sequence is WVVLVVVVLACLLLWAQVFNM.

The protein belongs to the MgrB family. In terms of assembly, may form homooligomers. Probably interacts with the periplasmic domain of PhoQ.

Its subcellular location is the cell inner membrane. In terms of biological role, phoP-regulated transcription is redox-sensitive, being activated when the periplasm becomes more reducing. MgrB acts between DsbA/DsbB and PhoP/PhoQ in this pathway. Represses PhoP/PhoQ signaling, possibly by binding to the periplasmic domain of PhoQ, altering its activity and that of downstream effector PhoP. The chain is PhoP/PhoQ regulator MgrB from Escherichia coli O157:H7.